Consider the following 82-residue polypeptide: MGGISVWQLLIIAVIVVLLFGTKKLRGIGGDLGGAVKGFKKAMSEDEPAKKDDKDADFEPKSLEEQQKKEAAPESKKDKEQA.

A helical membrane pass occupies residues 1-21 (MGGISVWQLLIIAVIVVLLFG). A disordered region spans residues 41–82 (KAMSEDEPAKKDDKDADFEPKSLEEQQKKEAAPESKKDKEQA). A compositionally biased stretch (basic and acidic residues) spans 42–82 (AMSEDEPAKKDDKDADFEPKSLEEQQKKEAAPESKKDKEQA).

It belongs to the TatA/E family. As to quaternary structure, the Tat system comprises two distinct complexes: a TatABC complex, containing multiple copies of TatA, TatB and TatC subunits, and a separate TatA complex, containing only TatA subunits. Substrates initially bind to the TatABC complex, which probably triggers association of the separate TatA complex to form the active translocon.

The protein localises to the cell inner membrane. Its function is as follows. Part of the twin-arginine translocation (Tat) system that transports large folded proteins containing a characteristic twin-arginine motif in their signal peptide across membranes. TatA could form the protein-conducting channel of the Tat system. The chain is Sec-independent protein translocase protein TatA from Vibrio campbellii (strain ATCC BAA-1116).